The following is a 968-amino-acid chain: Phosphatidylserine decarboxylase 2 proenzyme (968 aa).

The N-terminal stretch at 1-25 is a signal peptide; that stretch reads MAKVMRLIIFVCVALVAISVPAASS. Residues aspartate 500, histidine 570, and serine 683 each act as charge relay system; for autoendoproteolytic cleavage activity in the active site. Serine 683 serves as the catalytic Schiff-base intermediate with substrate; via pyruvic acid; for decarboxylase activity. Pyruvic acid (Ser); by autocatalysis is present on serine 683.

Belongs to the phosphatidylserine decarboxylase family. Heterodimer of a large membrane-associated beta subunit and a small pyruvoyl-containing alpha subunit. Requires pyruvate as cofactor. In terms of processing, is synthesized initially as an inactive proenzyme. Formation of the active enzyme involves a self-maturation process in which the active site pyruvoyl group is generated from an internal serine residue via an autocatalytic post-translational modification. Two non-identical subunits are generated from the proenzyme in this reaction, and the pyruvate is formed at the N-terminus of the alpha chain, which is derived from the carboxyl end of the proenzyme. The autoendoproteolytic cleavage occurs by a canonical serine protease mechanism, in which the side chain hydroxyl group of the serine supplies its oxygen atom to form the C-terminus of the beta chain, while the remainder of the serine residue undergoes an oxidative deamination to produce ammonia and the pyruvoyl prosthetic group on the alpha chain. During this reaction, the Ser that is part of the protease active site of the proenzyme becomes the pyruvoyl prosthetic group, which constitutes an essential element of the active site of the mature decarboxylase.

The protein localises to the parasitophorous vacuole. Its subcellular location is the cytoplasmic vesicle. It localises to the secretory vesicle. It carries out the reaction a 1,2-diacyl-sn-glycero-3-phospho-L-serine + H(+) = a 1,2-diacyl-sn-glycero-3-phosphoethanolamine + CO2. It functions in the pathway phospholipid metabolism; phosphatidylethanolamine biosynthesis; phosphatidylethanolamine from CDP-diacylglycerol: step 2/2. Catalyzes the formation of phosphatidylethanolamine (PtdEtn) from phosphatidylserine (PtdSer). Plays a central role in phospholipid metabolism and in the interorganelle trafficking of phosphatidylserine. Can act on liposomal and host cell PtdSer. This is Phosphatidylserine decarboxylase 2 proenzyme from Toxoplasma gondii (strain ATCC 50853 / GT1).